A 334-amino-acid polypeptide reads, in one-letter code: CRISPR-associated protein Cas1 3 (334 aa).

3 residues coordinate Mn(2+): Glu165, His230, and Glu245.

The protein belongs to the CRISPR-associated endonuclease Cas1 family. In terms of assembly, homodimer, forms a heterotetramer with a Cas2 homodimer. The cofactor is Mg(2+). Requires Mn(2+) as cofactor.

CRISPR (clustered regularly interspaced short palindromic repeat), is an adaptive immune system that provides protection against mobile genetic elements (viruses, transposable elements and conjugative plasmids). CRISPR clusters contain spacers, sequences complementary to antecedent mobile elements, and target invading nucleic acids. CRISPR clusters are transcribed and processed into CRISPR RNA (crRNA). Acts as a dsDNA endonuclease. Involved in the integration of spacer DNA into the CRISPR cassette. This Methanobrevibacter ruminantium (strain ATCC 35063 / DSM 1093 / JCM 13430 / OCM 146 / M1) (Methanobacterium ruminantium) protein is CRISPR-associated protein Cas1 3.